The primary structure comprises 182 residues: UPF0397 protein BCA_2731 (182 aa).

5 consecutive transmembrane segments (helical) span residues 9 to 29, 40 to 60, 71 to 91, 114 to 134, and 142 to 162; these read VVAI…GFSI, AILT…IGLI, WGIW…MGLI, ITGL…DIIV, and IVIQ…VLGL.

This sequence belongs to the UPF0397 family.

It is found in the cell membrane. This Bacillus cereus (strain 03BB102) protein is UPF0397 protein BCA_2731.